Here is a 247-residue protein sequence, read N- to C-terminus: Adenosylcobinamide-GDP ribazoletransferase (247 aa).

4 helical membrane-spanning segments follow: residues 34–54, 59–79, 113–133, and 194–214; these read IITF…VFMV, CGVP…TGGF, GGLA…ELAL, and VLLP…AIFI.

Belongs to the CobS family. Mg(2+) is required as a cofactor.

It localises to the cell inner membrane. The enzyme catalyses alpha-ribazole + adenosylcob(III)inamide-GDP = adenosylcob(III)alamin + GMP + H(+). It catalyses the reaction alpha-ribazole 5'-phosphate + adenosylcob(III)inamide-GDP = adenosylcob(III)alamin 5'-phosphate + GMP + H(+). The protein operates within cofactor biosynthesis; adenosylcobalamin biosynthesis; adenosylcobalamin from cob(II)yrinate a,c-diamide: step 7/7. In terms of biological role, joins adenosylcobinamide-GDP and alpha-ribazole to generate adenosylcobalamin (Ado-cobalamin). Also synthesizes adenosylcobalamin 5'-phosphate from adenosylcobinamide-GDP and alpha-ribazole 5'-phosphate. This Escherichia coli (strain ATCC 8739 / DSM 1576 / NBRC 3972 / NCIMB 8545 / WDCM 00012 / Crooks) protein is Adenosylcobinamide-GDP ribazoletransferase.